Here is a 208-residue protein sequence, read N- to C-terminus: MQPVTIALAKGRPAKQTIKLLQAAGLTFEELDATSRKLVFYNEDRTARVIFLKGMDVPIYVEKGAADIGIVGKDNIIESQAEVYELLDLGIGKCKFSIAAKQGVTLSSDNEITIATKYPIVAKRYFSKRNQSIDVVKLNGSVELAPLIGLADYIVDIVETGNTLRENGLEILEDIETISTKAIVNKASFATRSAEIQSIINRLSTVVG.

Belongs to the ATP phosphoribosyltransferase family. Short subfamily. In terms of assembly, heteromultimer composed of HisG and HisZ subunits.

The protein resides in the cytoplasm. It carries out the reaction 1-(5-phospho-beta-D-ribosyl)-ATP + diphosphate = 5-phospho-alpha-D-ribose 1-diphosphate + ATP. The protein operates within amino-acid biosynthesis; L-histidine biosynthesis; L-histidine from 5-phospho-alpha-D-ribose 1-diphosphate: step 1/9. Catalyzes the condensation of ATP and 5-phosphoribose 1-diphosphate to form N'-(5'-phosphoribosyl)-ATP (PR-ATP). Has a crucial role in the pathway because the rate of histidine biosynthesis seems to be controlled primarily by regulation of HisG enzymatic activity. This chain is ATP phosphoribosyltransferase, found in Oceanobacillus iheyensis (strain DSM 14371 / CIP 107618 / JCM 11309 / KCTC 3954 / HTE831).